Reading from the N-terminus, the 97-residue chain is Putative membrane protein insertion efficiency factor (97 aa).

This sequence belongs to the UPF0161 family.

The protein resides in the cell membrane. Could be involved in insertion of integral membrane proteins into the membrane. This is Putative membrane protein insertion efficiency factor from Lactobacillus gasseri (strain ATCC 33323 / DSM 20243 / BCRC 14619 / CIP 102991 / JCM 1131 / KCTC 3163 / NCIMB 11718 / NCTC 13722 / AM63).